A 751-amino-acid chain; its full sequence is Leucine-rich repeat-containing protein 56 homolog (751 aa).

The interval 1-149 (MKKSTVLDAR…IDKSRDNGQL (149 aa)) is disordered. Residues 13–22 (GPLPRRPQQP) are compositionally biased toward pro residues. Polar residues-rich tracts occupy residues 28-39 (RNSSQVEKNNAR) and 60-87 (HSQSQSLDTSFAPNTNTTLGSTDVNLNS). 5 LRR repeats span residues 210 to 235 (MPQLNSLKLNNSRITELRVLGTNYAN), 236 to 256 (LRRLWISNCLVSSVSGVGACA), 258 to 279 (VLEELYASFNSISDIDALTEVS), 280 to 304 (STLQVVDLEGNDIRDTDMLKRTLPQ), and 307 to 328 (KMKHLVLKGNPVASSETIVELS). Disordered stretches follow at residues 430 to 538 (SRSH…QRQQ), 645 to 698 (TCTH…EKDW), and 717 to 751 (EAALKERVQGSKEVDGGGLEKVESEDEEDVSPVVF). Composition is skewed to polar residues over residues 456–471 (KNSQSTASSGDSTNQG) and 662–671 (QQEQPTTAGA). Over residues 717 to 738 (EAALKERVQGSKEVDGGGLEKV) the composition is skewed to basic and acidic residues. The span at 739 to 751 (ESEDEEDVSPVVF) shows a compositional bias: acidic residues.

It belongs to the LRRC56 family.

It localises to the cell projection. The protein resides in the cilium. It is found in the flagellum. Its function is as follows. Required for the assembly of dynein arms in the distal portion of flagellum axoneme. This Trypanosoma brucei brucei (strain 927/4 GUTat10.1) protein is Leucine-rich repeat-containing protein 56 homolog.